The following is a 438-amino-acid chain: MQTIYTKITDIKGNLITVEAEGARLGELAEIERVDGRSSYASVLRFDAKKVTLQVFGGTSGLSTGDRVVFLGRSMEVTYGESLIGRRLNGVGKPIDGEGECFGDPIEISTPTFNPVCRVVPRDMVRTNIPMIDVFNCLVKSQKIPIFSSSGEKHNALLMRIAAQTDADIVIIGGMGLTFVDYSFFVEESKRLGFADKSVMFIHKAVDAPVECVLIPDMALACAEKFAVDQNKNVLVLLTDMTAFADALKEIAITMDQIPANRGYPGSLYSDLALRYEKAVDIAQGGSITLISVTTMPGDDITHPVPDNTGFITEGQFDLKNNCIDPFGSLSRLKQLVIGKVTREDHGDLANALIRLYADSRKANERMSMGFKLSNWDKKLLAFAELFETRLMSLEVNIPLEEALDIGWKILAQSFHSEEVGIKEQLINKYWPKSCLHR.

Belongs to the ATPase alpha/beta chains family.

In terms of biological role, produces ATP from ADP in the presence of a proton gradient across the membrane. The V-type beta chain is a regulatory subunit. The sequence is that of V-type ATP synthase beta chain from Chlamydia abortus (strain DSM 27085 / S26/3) (Chlamydophila abortus).